Here is a 45-residue protein sequence, read N- to C-terminus: Putative metallothionein-like protein 1B (45 aa).

Belongs to the metallothionein superfamily. Type 15 family.

Functionally, metallothioneins have a high content of cysteine residues that bind various heavy metals. Confers tolerance to cadmium (Cd) and plays a role in Cd and zinc (Zn) homeostasis. The protein is Putative metallothionein-like protein 1B (MT1B) of Arabidopsis thaliana (Mouse-ear cress).